Reading from the N-terminus, the 323-residue chain is MFLFEDLNVESAQAVKAEESPAQTVQSKEEQVPANSTDKVLVTHTKLLDVGAFNGVAKRKWNPKMKHYIIPRNAAQFSAQFDLINSDLLNLKLHEAFNYLTEAAKAKKNILFVGTKSKAVQELIQSIAERTNSFYINQRWLGGTLTNFKTISNSINQLKRLIHTRDNDLTKYTKKEQIMIMKKLAKLERFFGGIKDMQGLPHVLVIDDPIKEKNAVTEARKLRIPVIALCNTNSDPNVITLPIPANNYNIRSVTLLLNLLGDAVALAQGNPAKFAFKPDEEIDIPQLVKKETRTVVNRDRAGFNKKQPKAEEAAKPAEKKAEK.

The disordered stretch occupies residues Val295 to Lys323.

Belongs to the universal ribosomal protein uS2 family.

This chain is Small ribosomal subunit protein uS2, found in Mycoplasmoides gallisepticum (strain R(low / passage 15 / clone 2)) (Mycoplasma gallisepticum).